The chain runs to 268 residues: Ribosomal RNA small subunit methyltransferase A (268 aa).

Residues N16, L18, G43, E64, D89, and N110 each contribute to the S-adenosyl-L-methionine site.

This sequence belongs to the class I-like SAM-binding methyltransferase superfamily. rRNA adenine N(6)-methyltransferase family. RsmA subfamily.

The protein localises to the cytoplasm. The enzyme catalyses adenosine(1518)/adenosine(1519) in 16S rRNA + 4 S-adenosyl-L-methionine = N(6)-dimethyladenosine(1518)/N(6)-dimethyladenosine(1519) in 16S rRNA + 4 S-adenosyl-L-homocysteine + 4 H(+). In terms of biological role, specifically dimethylates two adjacent adenosines (A1518 and A1519) in the loop of a conserved hairpin near the 3'-end of 16S rRNA in the 30S particle. May play a critical role in biogenesis of 30S subunits. The sequence is that of Ribosomal RNA small subunit methyltransferase A from Pseudomonas syringae pv. syringae (strain B728a).